Reading from the N-terminus, the 314-residue chain is Protein phosphatase PTC7 homolog fig (314 aa).

The region spanning 43 to 309 (PYLVTVVQGR…DDITLILSSV (267 aa)) is the PPM-type phosphatase domain. The Mn(2+) site is built by Asp87, Gly88, and Asp232.

This sequence belongs to the PP2C family. It depends on Mg(2+) as a cofactor. Requires Mn(2+) as cofactor.

The enzyme catalyses O-phospho-L-seryl-[protein] + H2O = L-seryl-[protein] + phosphate. It catalyses the reaction O-phospho-L-threonyl-[protein] + H2O = L-threonyl-[protein] + phosphate. In Drosophila sechellia (Fruit fly), this protein is Protein phosphatase PTC7 homolog fig.